The sequence spans 350 residues: LIM domain-containing protein unc-95 (350 aa).

Residues 1-37 (MTISPQPSHQQFESYQWTTESRSSQQRHGTGTPSQDG) are compositionally biased toward polar residues. Residues 1–65 (MTISPQPSHQ…ESRNSNKDKV (65 aa)) are disordered. The span at 45-65 (PVERHVARWRSESRNSNKDKV) shows a compositional bias: basic and acidic residues. Residues 83–110 (LTALKNDVEQTTEIIRRKQEQMRMERRQ) are a coiled coil. Disordered regions lie at residues 177-198 (RRGQ…EIEY), 206-225 (PEEQ…METD), and 235-262 (MSEE…SGSP). In terms of domain architecture, LIM zinc-binding spans 268-334 (AVCAYCSEEI…HDCFYKLYNG (67 aa)).

In terms of processing, ubiquitinated. Ubiquitination by rnf-5 leads to dissociation from muscle dense bodies during molting and is required for ecdysis. As to expression, expressed in the body wall muscles, vulval muscles and the anal muscles. Expressed in the muscle arms of the head muscle cells that form neuromuscular junctions and in the anal depressor muscle.

The protein localises to the cytoplasm. It localises to the nucleus. The protein resides in the cell membrane. It is found in the myofibril. Its subcellular location is the sarcomere. The protein localises to the m line. It localises to the cell junction. The protein resides in the focal adhesion. Its function is as follows. Required for the assembly and integrity of muscle dense bodies, which establish the adhesion sites of the muscle cells to the extracellular matrix. Decreased localization of unc-95 to dense bodies and their subsequent dissociation plays an important role in ecdysis during molting. Involved in the organization of the muscle sarcomeric structure and thereby required for locomotion. In Caenorhabditis elegans, this protein is LIM domain-containing protein unc-95.